The following is a 242-amino-acid chain: Protein HTATIP2 (242 aa).

Ala2 bears the N-acetylalanine mark. The required for interaction with elongation factor EEF1A1 stretch occupies residues 2–25 (AETEALSKLREDFRMQNKSVFILG). NADPH is bound by residues Ser27, Gly28, Glu29, Thr30, Arg52, Arg53, Leu92, Gly93, Tyr143, Lys147, Leu170, and Arg178. Tyr143 functions as the Proton acceptor in the catalytic mechanism. The active site involves Lys147.

As to quaternary structure, monomer. Forms homodimers during oxidative stress. Interacts (via N-terminus) with elongation factor EEF1A1 (via middle-region); the interaction is direct and competes with EEF1A1 binding to guanyl-nucleotide exchange factor EEF1B2, thereby inhibiting GDP for GTP exchange and reactivation of EEF1A1. Interacts with nuclear transport receptors XPO4, IPO5/RANBP5, IPO7, IPO9 and KPNB1 as well as GCN1L1/GCN1 and LRPPRC probably through their HEAT repeats. Binds NCOA5/CIA.

Its subcellular location is the cytoplasm. Its function is as follows. Represses translation by preventing reactivation of elongation factor eEF1A. May also inhibit nuclear import by competing with nuclear import substrates for binding to a subset of nuclear transport receptors. Has additionally been proposed to act as a redox sensor involved in cellular oxidative stress surveillance. This is Protein HTATIP2 (HTATIP2) from Pongo pygmaeus (Bornean orangutan).